We begin with the raw amino-acid sequence, 296 residues long: Tuberculosinyl adenosine transferase (296 aa).

It belongs to the diterpene synthase family. Homodimer. Requires Mg(2+) as cofactor.

It carries out the reaction tuberculosinyl diphosphate + adenosine + H(+) = 1-tuberculosinyladenosine + diphosphate. It catalyses the reaction tuberculosinyl diphosphate + H2O = tuberculosinol + diphosphate. The enzyme catalyses tuberculosinyl diphosphate + H2O = (13R)-edaxadiene + diphosphate. The catalysed reaction is tuberculosinyl diphosphate + H2O = (13S)-edaxadiene + diphosphate. Tuberculosinyl transferase that catalyzes the condensation of adenosine and tuberculosinyl diphosphate (TbPP) to generate 1-tuberculosinyladenosine (1-TbAd), which acts as an antiacid that directly protects M.tuberculosis from acid pH and physically remodels M.tuberculosis phagolysosomes. In addition, acts as a phosphatase that catalyzes the diphosphate-removal from TbPP to produce both tuberculosinol (TOH) and isotuberculosinol (iso-TOH). The polypeptide is Tuberculosinyl adenosine transferase (Mycobacterium tuberculosis (strain CDC 1551 / Oshkosh)).